Reading from the N-terminus, the 582-residue chain is Proline--tRNA ligase (582 aa).

The protein belongs to the class-II aminoacyl-tRNA synthetase family. ProS type 1 subfamily. As to quaternary structure, homodimer.

The protein localises to the cytoplasm. The catalysed reaction is tRNA(Pro) + L-proline + ATP = L-prolyl-tRNA(Pro) + AMP + diphosphate. Functionally, catalyzes the attachment of proline to tRNA(Pro) in a two-step reaction: proline is first activated by ATP to form Pro-AMP and then transferred to the acceptor end of tRNA(Pro). As ProRS can inadvertently accommodate and process non-cognate amino acids such as alanine and cysteine, to avoid such errors it has two additional distinct editing activities against alanine. One activity is designated as 'pretransfer' editing and involves the tRNA(Pro)-independent hydrolysis of activated Ala-AMP. The other activity is designated 'posttransfer' editing and involves deacylation of mischarged Ala-tRNA(Pro). The misacylated Cys-tRNA(Pro) is not edited by ProRS. The polypeptide is Proline--tRNA ligase (Mycobacterium ulcerans (strain Agy99)).